The chain runs to 185 residues: Ribosome-recycling factor (185 aa).

It belongs to the RRF family.

It is found in the cytoplasm. Its function is as follows. Responsible for the release of ribosomes from messenger RNA at the termination of protein biosynthesis. May increase the efficiency of translation by recycling ribosomes from one round of translation to another. This chain is Ribosome-recycling factor, found in Streptococcus pneumoniae (strain 70585).